A 157-amino-acid chain; its full sequence is UPF0262 protein Avi_0642 (157 aa).

It belongs to the UPF0262 family.

In Allorhizobium ampelinum (strain ATCC BAA-846 / DSM 112012 / S4) (Agrobacterium vitis (strain S4)), this protein is UPF0262 protein Avi_0642.